A 181-amino-acid chain; its full sequence is MKILVVNNYGQFNHLIYRSIKDRVEARMISNETPVEDIVADGLILGGGPSMDRSGRCSEYLRTLDIPVLGICLGLQIMAVTFGGKVEPGKVGGYASVEIEVLEEDGILRGVPHRFMAWASHADQVTICPPEFRVIARSSICDIEAICHESRPLYGVQWHPEVAHTEYGEEVFDNFLEICRR.

The 180-residue stretch at 2 to 181 (KILVVNNYGQ…FDNFLEICRR (180 aa)) folds into the Glutamine amidotransferase type-1 domain. Catalysis depends on cysteine 72, which acts as the Nucleophile. Active-site residues include histidine 159 and glutamate 161.

Heterodimer composed of a glutamine amidotransferase subunit (A) and a GMP-binding subunit (B).

The catalysed reaction is XMP + L-glutamine + ATP + H2O = GMP + L-glutamate + AMP + diphosphate + 2 H(+). Its pathway is purine metabolism; GMP biosynthesis; GMP from XMP (L-Gln route): step 1/1. Functionally, catalyzes the synthesis of GMP from XMP. This is GMP synthase [glutamine-hydrolyzing] subunit A from Methanothrix thermoacetophila (strain DSM 6194 / JCM 14653 / NBRC 101360 / PT) (Methanosaeta thermophila).